Consider the following 444-residue polypeptide: Spermidine/putrescine import ATP-binding protein PotA (444 aa).

Residues 11–332 (ISLVDVDKEF…PVNKWVANFI (322 aa)) enclose the ABC transporter domain. 43-50 (GPSGSGKT) is a binding site for ATP. The interval 111-201 (RIKKKAEEIP…ESFKKKYLTR (91 aa)) is insert.

Belongs to the ABC transporter superfamily. Spermidine/putrescine importer (TC 3.A.1.11.1) family. As to quaternary structure, the complex is composed of two ATP-binding proteins (PotA), two transmembrane proteins (PotB and PotC) and a solute-binding protein (PotD).

Its subcellular location is the cell membrane. The enzyme catalyses ATP + H2O + polyamine-[polyamine-binding protein]Side 1 = ADP + phosphate + polyamineSide 2 + [polyamine-binding protein]Side 1.. Functionally, part of the ABC transporter complex PotABCD involved in spermidine/putrescine import. Responsible for energy coupling to the transport system. The protein is Spermidine/putrescine import ATP-binding protein PotA of Mesomycoplasma hyopneumoniae (strain J / ATCC 25934 / NCTC 10110) (Mycoplasma hyopneumoniae).